The primary structure comprises 109 residues: Parvalbumin beta (109 aa).

Residue Ser-1 is modified to N-acetylserine. EF-hand domains are found at residues 38 to 73 (KTPD…FASS) and 77 to 109 (LTDK…VKEA). The Ca(2+) site is built by Asp-51, Asp-53, Ser-55, Phe-57, Glu-59, Glu-62, Asp-90, Asp-92, Asp-94, Lys-96, and Glu-101.

The protein belongs to the parvalbumin family.

Its function is as follows. In muscle, parvalbumin is thought to be involved in relaxation after contraction. It binds two calcium ions. This Opsanus tau (Oyster toadfish) protein is Parvalbumin beta.